The chain runs to 138 residues: Gonadotropin subunit beta-2 (138 aa).

An N-terminal signal peptide occupies residues M1–S21. 6 disulfides stabilise this stretch: C27/C75, C41/C90, C44/C128, C52/C106, C56/C108, and C111/C118. N-linked (GlcNAc...) asparagine glycosylation is present at N31.

Belongs to the glycoprotein hormones subunit beta family. As to quaternary structure, heterodimer of an alpha and a beta chain.

The protein localises to the secreted. Involved in gametogenesis and steroidogenesis. This chain is Gonadotropin subunit beta-2 (cgbb), found in Clarias gariepinus (North African catfish).